Reading from the N-terminus, the 249-residue chain is Proteasome subunit alpha type-3 (249 aa).

Belongs to the peptidase T1A family. The 26S proteasome consists of a 20S proteasome core and two 19S regulatory subunits. The 20S proteasome core is composed of 28 subunits that are arranged in four stacked rings, resulting in a barrel-shaped structure. The two end rings are each formed by seven alpha subunits, and the two central rings are each formed by seven beta subunits. The catalytic chamber with the active sites is on the inside of the barrel.

It localises to the cytoplasm. Its subcellular location is the nucleus. Its function is as follows. The proteasome is a multicatalytic proteinase complex which is characterized by its ability to cleave peptides with Arg, Phe, Tyr, Leu, and Glu adjacent to the leaving group at neutral or slightly basic pH. The proteasome has an ATP-dependent proteolytic activity. The polypeptide is Proteasome subunit alpha type-3 (PAG1) (Spinacia oleracea (Spinach)).